A 464-amino-acid chain; its full sequence is MAEGNVGKLVQIIGPVIDIRFSRENLPNLLNAIEIEGPDGKIVVEVSQHIGDDTVRCVAMKSTDGLVRGMEAKDTGGPITVPVGRATLGRIFNVIGEPVDEKGAVAAEAKAPIHRPAPSFEDQATSTEILETGIKVVDLIAPYLKGGKIGLFGGAGVGKTVLIMELINNIAKEHGGLSVFSGVGERTREGNDLYNEMIESGVIDKTALVYGQMNEPPGARMRVGLTGLTMAEHFRDEEGQDVLLFIDNIFRFTQAGSEVSALLGRMPSAVGYQPTLATEMGALQERITSTRKGSITSVQAVYVPADDLTDPAPATTFAHLDATTVLSRQIVELGIYPAVDPLDSNSRVLDPAIVGDEHYSVARGVQEVLQRYKELQDIIAILGMDELSDEDKLTVSRARKIQRFLSQPFSVAEQFTGMAGKYVPLKETIRGFKEILEGKHDDIPESAFLFVGSIDEAVEKAKGK.

153-160 (GGAGVGKT) is a binding site for ATP.

The protein belongs to the ATPase alpha/beta chains family. As to quaternary structure, F-type ATPases have 2 components, CF(1) - the catalytic core - and CF(0) - the membrane proton channel. CF(1) has five subunits: alpha(3), beta(3), gamma(1), delta(1), epsilon(1). CF(0) has three main subunits: a(1), b(2) and c(9-12). The alpha and beta chains form an alternating ring which encloses part of the gamma chain. CF(1) is attached to CF(0) by a central stalk formed by the gamma and epsilon chains, while a peripheral stalk is formed by the delta and b chains.

The protein localises to the cell membrane. The enzyme catalyses ATP + H2O + 4 H(+)(in) = ADP + phosphate + 5 H(+)(out). Functionally, produces ATP from ADP in the presence of a proton gradient across the membrane. The catalytic sites are hosted primarily by the beta subunits. This chain is ATP synthase subunit beta, found in Alkaliphilus oremlandii (strain OhILAs) (Clostridium oremlandii (strain OhILAs)).